The sequence spans 332 residues: D-alanine--D-alanine ligase (332 aa).

In terms of domain architecture, ATP-grasp spans 112-312 (KRIWRADGLP…YPDLCLRILA (201 aa)). 138-193 (FQELGAPMIVKPSREGSTIGLTKVTSLGQCEQAYRLAAQHDPEVLCEQFIDGDETT) provides a ligand contact to ATP. Residues Asp-265, Glu-279, and Asn-281 each coordinate Mg(2+).

It belongs to the D-alanine--D-alanine ligase family. The cofactor is Mg(2+). Mn(2+) serves as cofactor.

The protein localises to the cytoplasm. It carries out the reaction 2 D-alanine + ATP = D-alanyl-D-alanine + ADP + phosphate + H(+). It functions in the pathway cell wall biogenesis; peptidoglycan biosynthesis. In terms of biological role, cell wall formation. This chain is D-alanine--D-alanine ligase, found in Acidovorax ebreus (strain TPSY) (Diaphorobacter sp. (strain TPSY)).